A 335-amino-acid chain; its full sequence is Pyridoxal 5'-phosphate synthase subunit PdxS (335 aa).

Asp-59 lines the D-ribose 5-phosphate pocket. Lys-116 functions as the Schiff-base intermediate with D-ribose 5-phosphate in the catalytic mechanism. A D-ribose 5-phosphate-binding site is contributed by Gly-188. Lys-200 serves as a coordination point for D-glyceraldehyde 3-phosphate. D-ribose 5-phosphate is bound by residues Gly-253 and 274–275 (GS).

It belongs to the PdxS/SNZ family. As to quaternary structure, in the presence of PdxT, forms a dodecamer of heterodimers.

The enzyme catalyses aldehydo-D-ribose 5-phosphate + D-glyceraldehyde 3-phosphate + L-glutamine = pyridoxal 5'-phosphate + L-glutamate + phosphate + 3 H2O + H(+). The protein operates within cofactor biosynthesis; pyridoxal 5'-phosphate biosynthesis. Catalyzes the formation of pyridoxal 5'-phosphate from ribose 5-phosphate (RBP), glyceraldehyde 3-phosphate (G3P) and ammonia. The ammonia is provided by the PdxT subunit. Can also use ribulose 5-phosphate and dihydroxyacetone phosphate as substrates, resulting from enzyme-catalyzed isomerization of RBP and G3P, respectively. This is Pyridoxal 5'-phosphate synthase subunit PdxS from Desulfurococcus amylolyticus (strain DSM 18924 / JCM 16383 / VKM B-2413 / 1221n) (Desulfurococcus kamchatkensis).